The primary structure comprises 552 residues: HTH-type transcriptional regulator SgrR (552 aa).

Residues 1-116 (MPSGRLQQQF…LISHLGRSFR (116 aa)) enclose the HTH marR-type domain. The H-T-H motif DNA-binding region spans 26-49 (LNELADLLNCSRRHMRTLLNTMQA). Residues 163–493 (ELEADIAHHW…RDWQDDAAQW (331 aa)) are solute-binding.

Activates the small RNA gene sgrS under glucose-phosphate stress conditions as well as yfdZ. Represses its own transcription under both stress and non-stress conditions. Might act as a sensor of the intracellular accumulation of phosphoglucose by binding these molecules in its C-terminal solute-binding domain. This is HTH-type transcriptional regulator SgrR from Salmonella typhi.